The sequence spans 312 residues: Porphobilinogen deaminase (312 aa).

C241 is subject to S-(dipyrrolylmethanemethyl)cysteine.

Belongs to the HMBS family. Monomer. Dipyrromethane serves as cofactor.

The enzyme catalyses 4 porphobilinogen + H2O = hydroxymethylbilane + 4 NH4(+). It functions in the pathway porphyrin-containing compound metabolism; protoporphyrin-IX biosynthesis; coproporphyrinogen-III from 5-aminolevulinate: step 2/4. Its function is as follows. Tetrapolymerization of the monopyrrole PBG into the hydroxymethylbilane pre-uroporphyrinogen in several discrete steps. This is Porphobilinogen deaminase from Trichlorobacter lovleyi (strain ATCC BAA-1151 / DSM 17278 / SZ) (Geobacter lovleyi).